The chain runs to 265 residues: Glutamate racemase (265 aa).

Substrate contacts are provided by residues 7–8 and 39–40; these read DS and YG. C70 serves as the catalytic Proton donor/acceptor. 71–72 contributes to the substrate binding site; sequence NT. Residue C179 is the Proton donor/acceptor of the active site. 180–181 serves as a coordination point for substrate; that stretch reads TH.

The protein belongs to the aspartate/glutamate racemases family.

It catalyses the reaction L-glutamate = D-glutamate. It participates in cell wall biogenesis; peptidoglycan biosynthesis. Its function is as follows. Provides the (R)-glutamate required for cell wall biosynthesis. In Gloeobacter violaceus (strain ATCC 29082 / PCC 7421), this protein is Glutamate racemase.